Consider the following 716-residue polypeptide: MNLFSPRTGLSPTETQELLYAYTGPAPVAYGTRTRAVLENVLRPYKYFYKEENVPQALHIKTGQKGPEEISTTSPSSGFHRDSVILLSRELKAKYPEAFERLKAWIDCELLEMEYAELSKGRQTLSFLRNRNQPAPIALEETIEYLQQNLGRPIGQSMLSYLRAVMEVLAMPKTTFTYEVATNLARFDFEEYDDGETGPLMMHFEKEKKKITITITQAELWEKTCTLGTMWKHLERGRLNRRTIATPSMLARGFVKIVEDAARVLLECLPSSGVPVGGEEKLAKLSSKLEAVSEVTGELSGDQEKFNECLDPDAMRLMWTVFLEDYPQWVKELFNIPFLIFKAKIADIGEGLTYQKEGVVRVFPFGEMPSEFDELLPNAIKDKEGKIVGIRCTLGMFMGMFNLSSTLLALIAADRSEITGDHVESSDDFIHFFKAKSYDDMFKQAELLRWSLKLVGINMSPSKCILISPAGIGEFNSKYHHRDFVGNVATDLPSLVPGGKNPSSDLAMGLNVIRHSINTNQMNFISGDLALRIFTKAYRHSYMAEGITRRTKFLEAFKKDPVLLNQGAPTVHSVSTLHLDEVCLRYQMHLLGEEELRRIMNPSNPITARTEEVVSFRPEGKLPMILEDNSVGSCFKYTFTRNRTVTDKPHRVLLEKEQQYQKITSFVEECFPELTIGNTTMPGTVKQACKRRLEYIIEQSDLPTEQKRALLEEMDS.

The 180-residue stretch at 286–465 (SSKLEAVSEV…GINMSPSKCI (180 aa)) folds into the RdRp catalytic domain.

This sequence belongs to the influenza viruses polymerase PB1 family. In terms of assembly, RNA polymerase is composed of three subunits: PA, PB1 and PB2.

It catalyses the reaction RNA(n) + a ribonucleoside 5'-triphosphate = RNA(n+1) + diphosphate. This is RNA-directed RNA polymerase catalytic subunit (P2) from Dhori virus (strain Indian/1313/61) (Dho).